The primary structure comprises 320 residues: Aspartate carbamoyltransferase catalytic subunit (320 aa).

Carbamoyl phosphate-binding residues include Arg-70 and Thr-71. Lys-98 contacts L-aspartate. 3 residues coordinate carbamoyl phosphate: Arg-120, His-149, and Gln-152. Positions 182 and 237 each coordinate L-aspartate. Positions 278 and 279 each coordinate carbamoyl phosphate.

The protein belongs to the aspartate/ornithine carbamoyltransferase superfamily. ATCase family. As to quaternary structure, heterododecamer (2C3:3R2) of six catalytic PyrB chains organized as two trimers (C3), and six regulatory PyrI chains organized as three dimers (R2).

The enzyme catalyses carbamoyl phosphate + L-aspartate = N-carbamoyl-L-aspartate + phosphate + H(+). The protein operates within pyrimidine metabolism; UMP biosynthesis via de novo pathway; (S)-dihydroorotate from bicarbonate: step 2/3. Catalyzes the condensation of carbamoyl phosphate and aspartate to form carbamoyl aspartate and inorganic phosphate, the committed step in the de novo pyrimidine nucleotide biosynthesis pathway. The polypeptide is Aspartate carbamoyltransferase catalytic subunit (Ruthia magnifica subsp. Calyptogena magnifica).